The following is a 225-amino-acid chain: Heptaprenylglyceryl phosphate synthase (225 aa).

Lysine 6 is a binding site for sn-glycerol 1-phosphate. Positions 8 and 34 each coordinate Mg(2+). Sn-glycerol 1-phosphate contacts are provided by residues 153 to 158 (YVEYSG), glycine 183, and 203 to 204 (GN).

It belongs to the GGGP/HepGP synthase family. Group I subfamily. Homodimer. Mg(2+) serves as cofactor.

It carries out the reaction sn-glycerol 1-phosphate + all-trans-heptaprenyl diphosphate = 3-heptaprenyl-sn-glycero-1-phosphate + diphosphate. Its pathway is membrane lipid metabolism; glycerophospholipid metabolism. In terms of biological role, prenyltransferase that catalyzes in vivo the transfer of the heptaprenyl moiety of heptaprenyl pyrophosphate (HepPP; 35 carbon atoms) to the C3 hydroxyl of sn-glycerol-1-phosphate (G1P), producing heptaprenylglyceryl phosphate (HepGP). This reaction is an ether-bond-formation step in the biosynthesis of archaea-type G1P-based membrane lipids found in Bacillales. This Listeria monocytogenes serotype 4a (strain HCC23) protein is Heptaprenylglyceryl phosphate synthase.